The chain runs to 476 residues: Bridging integrator 2 (476 aa).

Positions 26–242 (VLQKLGKTVE…MGKLDKQHSS (217 aa)) constitute a BAR domain. Disordered regions lie at residues 269–369 (YPCP…TEGA) and 395–476 (GAAP…LTPL). Residues 279-292 (EPSSGAEQTPTSPR) show a composition bias toward polar residues. A compositionally biased stretch (pro residues) spans 310-324 (PAEPGAPMPGPPPAS). The span at 325–339 (PTSVRSASESESECS) shows a compositional bias: low complexity. Basic and acidic residues predominate over residues 340 to 353 (GESREIDLSPKEME). Residues 461–476 (VSCNPPQDPSESLTPL) are compositionally biased toward polar residues.

It is found in the cytoplasm. The polypeptide is Bridging integrator 2 (BIN2) (Gallus gallus (Chicken)).